The following is a 218-amino-acid chain: Small ribosomal subunit protein uS5 (218 aa).

Positions 1 to 10 (MTQATNQTPG) are enriched in polar residues. Residues 1–63 (MTQATNQTPG…GRDERDSEWQ (63 aa)) form a disordered region. Over residues 11–25 (QDVPGAADVPAAAEG) the composition is skewed to low complexity. Residues 31–63 (GERRGGGGGRGGDRRGRGDRRGRGRDERDSEWQ) show a composition bias toward basic and acidic residues. In terms of domain architecture, S5 DRBM spans 62-125 (WQERVIQIRR…ADGKKHLVKV (64 aa)).

Belongs to the universal ribosomal protein uS5 family. Part of the 30S ribosomal subunit. Contacts proteins S4 and S8.

Functionally, with S4 and S12 plays an important role in translational accuracy. Its function is as follows. Located at the back of the 30S subunit body where it stabilizes the conformation of the head with respect to the body. This is Small ribosomal subunit protein uS5 from Synechococcus sp. (strain RCC307).